Reading from the N-terminus, the 358-residue chain is Acyl-CoA Delta-12 desaturase (358 aa).

The next 2 helical transmembrane spans lie at 30-50 (IILY…AMFY) and 55-75 (TVFY…AGSH). The Fe cation site is built by histidine 75, histidine 80, histidine 112, histidine 115, and histidine 116. The Histidine box-1 signature appears at 75–80 (HRLWAH). The short motif at 112 to 116 (HRVHH) is the Histidine box-2 element. A run of 2 helical transmembrane segments spans residues 175 to 195 (TFFA…YFWG) and 200 to 220 (TAFF…TFLV). Positions 225, 254, 257, and 258 each coordinate Fe cation. The Histidine box-3 signature appears at 254–258 (HNYHH).

The protein belongs to the fatty acid desaturase type 1 family. Fe(2+) serves as cofactor.

It is found in the membrane. It catalyses the reaction (9Z)-octadecenoyl-CoA + 2 Fe(II)-[cytochrome b5] + O2 + 2 H(+) = (9Z,12Z)-octadecadienoyl-CoA + 2 Fe(III)-[cytochrome b5] + 2 H2O. It carries out the reaction (9Z)-hexadecenoyl-CoA + 2 Fe(II)-[cytochrome b5] + O2 + 2 H(+) = (9Z,12Z)-hexadecadienoyl-CoA + 2 Fe(III)-[cytochrome b5] + 2 H2O. Catalyzes the formation of a Delta12 double bond, acting on monounsaturated fatty acyl substrates like palmitoleoyl-CoA ((9Z)-hexadecenoyl-CoA) and oleoyl-CoA ((9Z)-octadecenoyl-CoA) with higher desaturation activity on (9Z)-octadecenoyl-CoA than (9Z)-hexadecenoyl-CoA. Requires preexisting cis double bond at the Delta9 position of fatty acyls to be able to insert the Delta12 double bond. Delta12-desaturation of (9Z)-octadecenoyl-CoA in insects produces (9Z,12Z)-octadecadienoyl-CoA (linoleoyl-CoA) which may be used to supply precursors of crucial mediators of immunity and reproduction and other essential functions. This Tribolium castaneum (Red flour beetle) protein is Acyl-CoA Delta-12 desaturase.